We begin with the raw amino-acid sequence, 476 residues long: Aspartyl/glutamyl-tRNA(Asn/Gln) amidotransferase subunit B (476 aa).

The protein belongs to the GatB/GatE family. GatB subfamily. As to quaternary structure, heterotrimer of A, B and C subunits.

The enzyme catalyses L-glutamyl-tRNA(Gln) + L-glutamine + ATP + H2O = L-glutaminyl-tRNA(Gln) + L-glutamate + ADP + phosphate + H(+). The catalysed reaction is L-aspartyl-tRNA(Asn) + L-glutamine + ATP + H2O = L-asparaginyl-tRNA(Asn) + L-glutamate + ADP + phosphate + 2 H(+). Its function is as follows. Allows the formation of correctly charged Asn-tRNA(Asn) or Gln-tRNA(Gln) through the transamidation of misacylated Asp-tRNA(Asn) or Glu-tRNA(Gln) in organisms which lack either or both of asparaginyl-tRNA or glutaminyl-tRNA synthetases. The reaction takes place in the presence of glutamine and ATP through an activated phospho-Asp-tRNA(Asn) or phospho-Glu-tRNA(Gln). This is Aspartyl/glutamyl-tRNA(Asn/Gln) amidotransferase subunit B from Bacillus licheniformis (strain ATCC 14580 / DSM 13 / JCM 2505 / CCUG 7422 / NBRC 12200 / NCIMB 9375 / NCTC 10341 / NRRL NRS-1264 / Gibson 46).